The sequence spans 509 residues: MFS transporter fsdG (509 aa).

Residues Asn-8 and Asn-26 are each glycosylated (N-linked (GlcNAc...) asparagine). A run of 4 helical transmembrane segments spans residues 63–83, 103–123, 139–159, and 162–182; these read FLIH…ATTM, IALT…VTSP, IFFL…MFIA, and FLAG…IADF. N-linked (GlcNAc...) asparagine glycosylation occurs at Asn-189. Transmembrane regions (helical) follow at residues 195–215, 222–242, 298–318, and 341–361; these read LFAL…GFVA, WTFR…CIFL, LIFL…FGLI, and GLSY…FNFI. N-linked (GlcNAc...) asparagine glycosylation is present at Asn-367. Transmembrane regions (helical) follow at residues 380-400, 408-428, 442-462, and 474-494; these read YLPL…WYGW, WVVP…IIMP, AASV…FLPL, and GWGN…PAIF.

This sequence belongs to the major facilitator superfamily.

It localises to the cell membrane. Efflux pump that might be required for efficient secretion of fusaridione A or other secondary metabolies produced by the fusaridione A gene cluster. The sequence is that of MFS transporter fsdG from Fusarium heterosporum.